The chain runs to 501 residues: Myrosinase MA1 (501 aa).

Cystine bridges form between C6/C438, C14/C434, and C206/C214. N-linked (GlcNAc...) asparagine glycosylation is present at N21. Q39 is a binding site for substrate. H56 contacts Zn(2+). N-linked (GlcNAc...) asparagine glycosylation occurs at N60. D70 is a binding site for Zn(2+). The N-linked (GlcNAc...) asparagine glycan is linked to N90. 2 residues coordinate substrate: H141 and N186. Q187 is a binding site for L-ascorbate. N218 and N244 each carry an N-linked (GlcNAc...) asparagine glycan. Residue R259 participates in L-ascorbate binding. N-linked (GlcNAc...) asparagine glycans are attached at residues N265 and N292. Y330 is a binding site for substrate. N343, N346, and N361 each carry an N-linked (GlcNAc...) asparagine glycan. The active-site Nucleophile is E409. Residues W457 and E464 to F465 contribute to the substrate site. N482 carries N-linked (GlcNAc...) asparagine glycosylation.

This sequence belongs to the glycosyl hydrolase 1 family. As to quaternary structure, homodimer. As to expression, in vacuoles called myrosin grains of a certain class of cells, myrosin cells, distributed in the cotyledons and the axis of the embryo as well as in different organs of the growing plant.

It is found in the vacuole. It carries out the reaction a thioglucoside + H2O = a sugar + a thiol.. Functionally, degradation of glucosinolates (glucose residue linked by a thioglucoside bound to an amino acid derivative) to glucose, sulfate and any of the products: thiocyanates, isothiocyanates, nitriles, epithionitriles or oxazolidine-2-thiones. In Sinapis alba (White mustard), this protein is Myrosinase MA1.